A 47-amino-acid polypeptide reads, in one-letter code: uncharacterized protein (47 aa).

Residues 1 to 25 (MAHKCASAKLLSGIMALLFNGKSLL) form the signal peptide.

This is an uncharacterized protein from Saccharomyces cerevisiae (strain ATCC 204508 / S288c) (Baker's yeast).